We begin with the raw amino-acid sequence, 372 residues long: Transcription factor MYB80 (372 aa).

HTH myb-type domains lie at 9-65 and 66-116; these read KDNV…RPDL and KHGE…KKKL. DNA-binding regions (H-T-H motif) lie at residues 37-61 and 89-112; these read WRLI…TNYL and WSVI…NTKL. Over residues 298 to 311 the composition is skewed to polar residues; the sequence is MWSHQSLYSGSSGT. Residues 298 to 347 are disordered; that stretch reads MWSHQSLYSGSSGTEEARRELPEKGNDSVGSSGGDDDAADDGKDSGKGAA. The segment covering 312–323 has biased composition (basic and acidic residues); that stretch reads EEARRELPEKGN.

Its subcellular location is the nucleus. Essential for tapetum development in anthers and microsporogenesis. May regulate the timing of tapetal programmed cell death (PCD) which is critical for pollen development. This Oryza sativa subsp. japonica (Rice) protein is Transcription factor MYB80.